A 326-amino-acid chain; its full sequence is Lipid droplet-associated hydrolase (326 aa).

Ser-140 (nucleophile) is an active-site residue. Residues Asp-272 and His-301 each act as charge relay system in the active site.

Belongs to the AB hydrolase superfamily. LDAH family. In terms of tissue distribution, expressed in liver, adrenal gland, prostate, spleen, kidney, brown and white adipose tissue, testis and to a lesser extent in brain (at protein level). Expressed in peritoneal macrophages and bone marrow-derived macrophages (at protein level). Highly expressed in macrophage and foam cell-rich areas in atherosclerotic lesions (at protein level). mRNA, but no protein, expressed in heart and muscle.

The protein localises to the lipid droplet. It localises to the endoplasmic reticulum. It carries out the reaction a cholesterol ester + H2O = cholesterol + a fatty acid + H(+). In terms of biological role, probable serine lipid hydrolase associated with lipid droplets. Has low cholesterol esterase activity. Appears to lack triglyceride lipase activity. Involved in cholesterol and triglyceride homeostasis; stimulates cellular triglyceride accumulation and cellular cholesterol release. Acts antagonistically with PNPLA2/ATGL in regulation of cellular lipid stores. May regulate triglyceride accumulation indirectly through stimulation of PNPLA2/ATGL ubiquitination and proteasomal degradation. Promotes microtubule-dependent lipid droplet fusion. Highly expressed in macrophage-rich areas in atherosclerotic lesions, suggesting that it could promote cholesterol ester turnover in macrophages. Functionally, stimulates cellular triglyceride accumulation and lipid droplet fusion. Associates with lipid droplets but does not stimulate cellular triglyceride accumulation, lipid droplet fusion or ATGL proteasomal degradation. The protein is Lipid droplet-associated hydrolase of Mus musculus (Mouse).